A 289-amino-acid chain; its full sequence is 4-hydroxy-3-methylbut-2-enyl diphosphate reductase (289 aa).

C12 is a [4Fe-4S] cluster binding site. Residues H41 and H84 each contribute to the (2E)-4-hydroxy-3-methylbut-2-enyl diphosphate site. Residues H41 and H84 each coordinate dimethylallyl diphosphate. Isopentenyl diphosphate is bound by residues H41 and H84. C106 contributes to the [4Fe-4S] cluster binding site. Position 134 (H134) interacts with (2E)-4-hydroxy-3-methylbut-2-enyl diphosphate. Position 134 (H134) interacts with dimethylallyl diphosphate. H134 contributes to the isopentenyl diphosphate binding site. The Proton donor role is filled by E136. S172 lines the (2E)-4-hydroxy-3-methylbut-2-enyl diphosphate pocket. C200 is a [4Fe-4S] cluster binding site. Residues S229, N231, and S273 each contribute to the (2E)-4-hydroxy-3-methylbut-2-enyl diphosphate site. Positions 229, 231, and 273 each coordinate dimethylallyl diphosphate. Residues S229, N231, and S273 each coordinate isopentenyl diphosphate.

This sequence belongs to the IspH family. It depends on [4Fe-4S] cluster as a cofactor.

It catalyses the reaction isopentenyl diphosphate + 2 oxidized [2Fe-2S]-[ferredoxin] + H2O = (2E)-4-hydroxy-3-methylbut-2-enyl diphosphate + 2 reduced [2Fe-2S]-[ferredoxin] + 2 H(+). The catalysed reaction is dimethylallyl diphosphate + 2 oxidized [2Fe-2S]-[ferredoxin] + H2O = (2E)-4-hydroxy-3-methylbut-2-enyl diphosphate + 2 reduced [2Fe-2S]-[ferredoxin] + 2 H(+). It participates in isoprenoid biosynthesis; dimethylallyl diphosphate biosynthesis; dimethylallyl diphosphate from (2E)-4-hydroxy-3-methylbutenyl diphosphate: step 1/1. It functions in the pathway isoprenoid biosynthesis; isopentenyl diphosphate biosynthesis via DXP pathway; isopentenyl diphosphate from 1-deoxy-D-xylulose 5-phosphate: step 6/6. Functionally, catalyzes the conversion of 1-hydroxy-2-methyl-2-(E)-butenyl 4-diphosphate (HMBPP) into a mixture of isopentenyl diphosphate (IPP) and dimethylallyl diphosphate (DMAPP). Acts in the terminal step of the DOXP/MEP pathway for isoprenoid precursor biosynthesis. This is 4-hydroxy-3-methylbut-2-enyl diphosphate reductase from Opitutus terrae (strain DSM 11246 / JCM 15787 / PB90-1).